A 39-amino-acid chain; its full sequence is Cytochrome b559 subunit beta (39 aa).

A helical transmembrane segment spans residues 14–30 (WLAIHGLAVPTVFFLGS). Position 18 (histidine 18) interacts with heme.

It belongs to the PsbE/PsbF family. In terms of assembly, heterodimer of an alpha subunit and a beta subunit. PSII is composed of 1 copy each of membrane proteins PsbA, PsbB, PsbC, PsbD, PsbE, PsbF, PsbH, PsbI, PsbJ, PsbK, PsbL, PsbM, PsbT, PsbX, PsbY, PsbZ, Psb30/Ycf12, at least 3 peripheral proteins of the oxygen-evolving complex and a large number of cofactors. It forms dimeric complexes. It depends on heme b as a cofactor.

The protein localises to the plastid. It localises to the chloroplast thylakoid membrane. Functionally, this b-type cytochrome is tightly associated with the reaction center of photosystem II (PSII). PSII is a light-driven water:plastoquinone oxidoreductase that uses light energy to abstract electrons from H(2)O, generating O(2) and a proton gradient subsequently used for ATP formation. It consists of a core antenna complex that captures photons, and an electron transfer chain that converts photonic excitation into a charge separation. In Ephedra sinica (Chinese ephedra), this protein is Cytochrome b559 subunit beta.